A 376-amino-acid polypeptide reads, in one-letter code: MADSNSKHQDSLQSICYKRGSLQLLDQRKLPLETVYLEIKGADDGWHAIRDMVVRGAPAIAIAAALSLAVEVSNLEDFIGTSDDAASFLNSKLDYLVTSRPTAVNLSDAVTKLKGVISNAAATAFEAMSVFQAFLEAAEDMLREDVAANRAIGLYGASFLQSHIKDSKNLSILTHCNTGSLATAGYGTALGVIRSVHAEGILLRAYCTETRPFNQGSRLTAFELVHDNIPATLIADSAAAALMQAGRVDAVIVGADRVAANGDTANKIGTYSLALSAKHHHIPFFVAAPLTSIDLTLSSGQEIVIEERSPKELLNSRGGLGEQVAASGICVWNPAFDVTPADLIAGIITEKGVITKTGDVFDIKDFIHNATSHCCK.

Residue Asp256 is the Proton donor of the active site.

The protein belongs to the eIF-2B alpha/beta/delta subunits family. MtnA subfamily.

The protein localises to the cytoplasm. The protein resides in the nucleus. The enzyme catalyses 5-(methylsulfanyl)-alpha-D-ribose 1-phosphate = 5-(methylsulfanyl)-D-ribulose 1-phosphate. The protein operates within amino-acid biosynthesis; L-methionine biosynthesis via salvage pathway; L-methionine from S-methyl-5-thio-alpha-D-ribose 1-phosphate: step 1/6. Its function is as follows. Catalyzes the interconversion of methylthioribose-1-phosphate (MTR-1-P) into methylthioribulose-1-phosphate (MTRu-1-P). The polypeptide is Methylthioribose-1-phosphate isomerase (Vitis vinifera (Grape)).